The chain runs to 437 residues: GTPase Era, mitochondrial (437 aa).

Residues 1-43 (MAAPSWRGARLVQSVLRVWQVGPHVARERVIPFSSLLGFQRRC) constitute a mitochondrion transit peptide. The Era-type G domain occupies 112–330 (RVLRVVLLGA…QYLLTQAQPG (219 aa)). Positions 120–127 (GAPNAGKS) are G1. 120–127 (GAPNAGKS) lines the GTP pocket. Residues 146–150 (HTTRC) are G2. The tract at residues 167–170 (DTPG) is G3. Position 167–171 (167–171 (DTPGI)) interacts with GTP. Residue serine 173 is modified to Phosphoserine. GTP is bound at residue 236–239 (NKVD). Residues 236–239 (NKVD) form a G4 region. The tract at residues 271–290 (HSHPGTHCPSPAVKDPNTQS) is disordered. The tract at residues 308–310 (LSA) is G5. The 78-residue stretch at 360–437 (LPQEVPYNVQ…DIRLSVKLLK (78 aa)) folds into the KH type-2 domain.

Belongs to the TRAFAC class TrmE-Era-EngA-EngB-Septin-like GTPase superfamily. Era GTPase family.

The protein localises to the mitochondrion matrix. It localises to the mitochondrion inner membrane. Functionally, probable GTPase that plays a role in the mitochondrial ribosomal small subunit assembly. Specifically binds the 12S mitochondrial rRNA (12S mt-rRNA) to a 33 nucleotide section delineating the 3' terminal stem-loop region. May act as a chaperone that protects the 12S mt-rRNA on the 28S mitoribosomal subunit during ribosomal small subunit assembly. The sequence is that of GTPase Era, mitochondrial (ERAL1) from Homo sapiens (Human).